Reading from the N-terminus, the 217-residue chain is Probable transaldolase (217 aa).

Lysine 83 serves as the catalytic Schiff-base intermediate with substrate.

Belongs to the transaldolase family. Type 3B subfamily.

It is found in the cytoplasm. The catalysed reaction is D-sedoheptulose 7-phosphate + D-glyceraldehyde 3-phosphate = D-erythrose 4-phosphate + beta-D-fructose 6-phosphate. It participates in carbohydrate degradation; pentose phosphate pathway; D-glyceraldehyde 3-phosphate and beta-D-fructose 6-phosphate from D-ribose 5-phosphate and D-xylulose 5-phosphate (non-oxidative stage): step 2/3. In terms of biological role, transaldolase is important for the balance of metabolites in the pentose-phosphate pathway. This chain is Probable transaldolase, found in Caldicellulosiruptor saccharolyticus (strain ATCC 43494 / DSM 8903 / Tp8T 6331).